Reading from the N-terminus, the 1013-residue chain is MTGMRGLSVFISDVRNCQNKEAERLRVDKELGNIRTCFKNEKVLTPYKKKKYVWKMLYIHMLGYDVDFGHMEAVSLISAPKYPEKQVGYIVTSCLLNENHDFLKLAINTVRNDIIGRNETFQCLALTLVGNIGGRDFAESLAPDVQKLLISSSCRPLVRKKAALCLLRLFRKNPDAVNVDGWADRMAQLLDERDLGVLTSSTSLLVALVSNNHEAYSSCLPKCVKILERLARNQDVPQEYTYYGIPSPWLQVKAMRALQYFPTIEDPSTRKALFEVLQRILMGTDVVKNVNKNNASHAVLFEALSLVMHLDAEKEMMSQCVALLGKFISVREPNIRYLGLENMTRMLMVTDVQDIIKKHQSQIITSLKDPDISIRRRALDLLYGMCDVSNAKDIVEELLQYLSTAEFSMREELSLKAAILAEKFAPDLSWYVDVILQLIDKAGDFVSDDIWFRVVQFVTNNEDLQPYAASKAREYMDKIAIHETMVKVSAYILGEYGHLLARQPGCSASELFSILHEKLPTVSTPTIPILLSTYAKLLMHAQPPDPELQKKVWAVFKKYESCIDVEIQQRAVEYFELSKKGPAFMDVLAEMPKFPERQSSLIKKAENVEDTADQSAIKLRAQQQPSNAIVLADPQPVNGAPPPLKVPILSGSTDPESVARSLSHPNGTLSNIDPQTPSPDLLSDLLGPLAIEAPPGAVSYEQHGPVGAEGVPDEIDGSAIVPVEEQTNTVELIGNIAERFHALCLKDSGVLYEDPHIQIGIKAEWRGHHGRLVLFMGNKNTSPLTSVQALILPPAHLRLDLSPVPDTIPPRAQVQSPLEVMNIRPSRDVAVLDFSYKFGTNVVSAKLRIPATLNKFLQPLQLTSEEFFPQWRAISGPPLKLQEVVRGVRPLALPEMANLFNSFHVTICPGLDPNPNNLVASTTFYSETTGAMLCLARIETDPADRTQLRLTVGSGDPTLTFELKEFIKEQLITIPMGSRALVPAAGPAPSPAVQPPSPAALADDPGAMLAGLL.

4 HEAT repeats span residues 254-289 (AMRALQYFPTIEDPSTRKALFEVLQRILMGTDVVKN), 354-391 (DIIKKHQSQIITSLKDPDISIRRRALDLLYGMCDVSNA), 393-430 (DIVEELLQYLSTAEFSMREELSLKAAILAEKFAPDLSW), and 521-565 (TVST…CIDV). The segment at 652-676 (STDPESVARSLSHPNGTLSNIDPQT) is disordered. The span at 663–675 (SHPNGTLSNIDPQ) shows a compositional bias: polar residues. The GAE domain occupies 742-841 (ALCLKDSGVL…LDFSYKFGTN (100 aa)). The segment at 760–1013 (GIKAEWRGHH…DPGAMLAGLL (254 aa)) is required for AP180 binding.

It belongs to the adaptor complexes large subunit family. Adaptor protein complex 2 (AP-2) is a heterotetramer composed of two large adaptins (alpha-type and beta-type subunits), a medium adaptin (mu-type subunit) and a small adaptin (sigma-type subunit). Interacts with AP180.

It is found in the membrane. It localises to the coated pit. Functionally, subunit of the adaptor protein complex 2 (AP-2). Adaptor protein complexes function in protein transport via transport vesicles in different membrane traffic pathways. Adaptor protein complexes are vesicle coat components and appear to be involved in cargo selection and vesicle formation. AP-2 is involved in clathrin-dependent endocytosis in which cargo proteins are incorporated into vesicles surrounded by clathrin (clathrin-coated vesicles, CCVs) which are destined for fusion with the early endosome. The complex binds polyphosphoinositides. The polypeptide is AP-2 complex subunit alpha-2 (ALPHAC-AD) (Arabidopsis thaliana (Mouse-ear cress)).